A 419-amino-acid chain; its full sequence is tRNA(Ile)-lysidine synthase (419 aa).

31-36 (SGGGDS) is an ATP binding site.

This sequence belongs to the tRNA(Ile)-lysidine synthase family.

It localises to the cytoplasm. It catalyses the reaction cytidine(34) in tRNA(Ile2) + L-lysine + ATP = lysidine(34) in tRNA(Ile2) + AMP + diphosphate + H(+). Its function is as follows. Ligates lysine onto the cytidine present at position 34 of the AUA codon-specific tRNA(Ile) that contains the anticodon CAU, in an ATP-dependent manner. Cytidine is converted to lysidine, thus changing the amino acid specificity of the tRNA from methionine to isoleucine. The chain is tRNA(Ile)-lysidine synthase from Ruegeria pomeroyi (strain ATCC 700808 / DSM 15171 / DSS-3) (Silicibacter pomeroyi).